The chain runs to 100 residues: Putative septation protein SpoVG (100 aa).

The protein belongs to the SpoVG family.

Its function is as follows. Could be involved in septation. The polypeptide is Putative septation protein SpoVG (Staphylococcus aureus (strain JH1)).